The sequence spans 204 residues: Distal tail protein pb9 (204 aa).

Homohexamer. Interacts with baseplate tube protein p140 and baseplate hub protein pb3.

The protein localises to the virion. Functionally, forms the simplified baseplate, together with the p132 collar protein, the baseplate tube protein p140 and baseplate hub protein pb3. This Escherichia phage T5 (Enterobacteria phage T5) protein is Distal tail protein pb9 (D16).